Here is a 139-residue protein sequence, read N- to C-terminus: Putative pre-16S rRNA nuclease (139 aa).

This sequence belongs to the YqgF nuclease family.

The protein localises to the cytoplasm. In terms of biological role, could be a nuclease involved in processing of the 5'-end of pre-16S rRNA. This is Putative pre-16S rRNA nuclease from Pectobacterium carotovorum subsp. carotovorum (strain PC1).